Reading from the N-terminus, the 594-residue chain is Zinc finger protein 467 (594 aa).

Residues 1 to 70 are disordered; that stretch reads MRETLEALNS…HTEQAEAPCM (70 aa). Lys97 participates in a covalent cross-link: Glycyl lysine isopeptide (Lys-Gly) (interchain with G-Cter in SUMO2). C2H2-type zinc fingers lie at residues 160–182, 188–210, 216–238, 244–266, 272–294, 300–322, 355–377, 430–452, 458–480, 486–508, 514–536, and 542–564; these read YGCE…QRLH, CACP…QRSH, FPCS…LRTH, YPCA…QKTH, FPCT…QRIH, YQCT…QRVH, FACS…QSLH, FFCP…RRVH, FACA…SRAH, FACA…QAVH, HACA…QAIH, and FSCP…QRIH. The interval 313-350 is disordered; it reads QHLVRHQRVHDAASRTRSSPDIPATPHPPTASLAPSPT. Lys368 participates in a covalent cross-link: Glycyl lysine isopeptide (Lys-Gly) (interchain with G-Cter in SUMO2).

It belongs to the krueppel C2H2-type zinc-finger protein family. In terms of assembly, interacts with STAT3. Enhances STAT3 activity by keeping it in the nucleus.

The protein localises to the nucleus. Its function is as follows. Transcription factor that promotes adipocyte differentiation and suppresses osteoblast differentiation in the bone marrow. Enhances the osteoclast-supporting ability of stromal cells. Binds with STAT3 the consensus sequence 5'-CTTCTGGGAAGA-3' of the acute phase response element (APRE). Transactivates several promoters including FOS, OSM and PPARG. Recruits a histone deacetylase complex. The chain is Zinc finger protein 467 (Znf467) from Rattus norvegicus (Rat).